A 102-amino-acid chain; its full sequence is Small ribosomal subunit protein uS10 (102 aa).

It belongs to the universal ribosomal protein uS10 family. In terms of assembly, part of the 30S ribosomal subunit.

Its function is as follows. Involved in the binding of tRNA to the ribosomes. The polypeptide is Small ribosomal subunit protein uS10 (Methanosphaerula palustris (strain ATCC BAA-1556 / DSM 19958 / E1-9c)).